Consider the following 398-residue polypeptide: uncharacterized protein (398 aa).

It belongs to the glycosyltransferase 2 family.

This is an uncharacterized protein from Escherichia coli (strain K12).